The following is a 604-amino-acid chain: Prostaglandin G/H synthase 2 (604 aa).

An N-terminal signal peptide occupies residues 1-17 (MLARALLLCAAVALSGA). The EGF-like domain occupies 18–55 (ANPCCSHPCQNRGVCMSVGFDQYKCDCTRTGFYGENCT). 4 cysteine pairs are disulfide-bonded: C21-C32, C22-C145, C26-C42, and C44-C54. N53 carries an N-linked (GlcNAc...) asparagine glycan. Substrate is bound at residue R106. N130 is a glycosylation site (N-linked (GlcNAc...) asparagine). The Proton acceptor role is filled by H193. Substrate is bound at residue Y341. The active-site For cyclooxygenase activity is the Y371. A heme b-binding site is contributed by H374. An N-linked (GlcNAc...) asparagine glycan is attached at N396. At C526 the chain carries S-nitrosocysteine. Cysteines 555 and 561 form a disulfide. Residue S565 is modified to O-acetylserine. N580 carries N-linked (GlcNAc...) asparagine glycosylation.

Belongs to the prostaglandin G/H synthase family. In terms of assembly, homodimer. It depends on heme b as a cofactor. Post-translationally, S-nitrosylation by NOS2 (iNOS) activates enzyme activity. S-nitrosylation may take place on different Cys residues in addition to Cys-526. In terms of processing, acetylated at Ser-565 by SPHK1. During neuroinflammation, acetylation by SPHK1 promotes neuronal secretion of specialized preresolving mediators (SPMs), especially 15-R-lipoxin A4, which results in an increase of phagocytic microglia.

It is found in the microsome membrane. Its subcellular location is the endoplasmic reticulum membrane. The protein resides in the nucleus inner membrane. It localises to the nucleus outer membrane. The enzyme catalyses (5Z,8Z,11Z,14Z)-eicosatetraenoate + AH2 + 2 O2 = prostaglandin H2 + A + H2O. It catalyses the reaction (5Z,8Z,11Z,14Z)-eicosatetraenoate + 2 O2 = prostaglandin G2. It carries out the reaction prostaglandin G2 + AH2 = prostaglandin H2 + A + H2O. The catalysed reaction is (5Z,8Z,11Z,14Z,17Z)-eicosapentaenoate + 2 O2 = prostaglandin G3. The enzyme catalyses prostaglandin G3 + AH2 = prostaglandin H3 + A + H2O. It catalyses the reaction (8Z,11Z,14Z)-eicosatrienoate + 2 O2 = prostaglandin G1. It carries out the reaction prostaglandin G1 + AH2 = prostaglandin H1 + A + H2O. The catalysed reaction is 2-(5Z,8Z,11Z,14Z)-eicosatetraenoyl-sn-glycero-3-phosphoethanolamine + 2 O2 = 2-(prostaglandin G2)-sn-glycero-3-phosphoethanolamine. The enzyme catalyses 2-(prostaglandin G2)-sn-glycero-3-phosphoethanolamine + AH2 = 2-(prostaglandin H2)-sn-glycero-3-phosphoethanolamine + A + H2O. It catalyses the reaction 2-(5Z,8Z,11Z,14Z)-eicosatetraenoyl-sn-glycero-3-phosphocholine + 2 O2 = 2-(prostaglandin G2)-sn-glycero-3-phosphocholine. It carries out the reaction 2-(prostaglandin G2)-sn-glycero-3-phosphocholine + AH2 = 2-(prostaglandin H2)-sn-glycero-3-phosphocholine + A + H2O. The catalysed reaction is (15S)-hydroperoxy-(5Z,8Z,11Z,13E)-eicosatetraenoate + AH2 = (15S)-hydroxy-(5Z,8Z,11Z,13E)-eicosatetraenoate + A + H2O. The enzyme catalyses 2-(5Z,8Z,11Z,14Z)-eicosatetraenoyl-sn-glycero-3-phosphocholine + AH2 + O2 = 2-[(15S)-hydroxy-(5Z,8Z,11Z,13E)-eicosatetraenoyl]-sn-glycero-3-phosphocholine + A + H2O. It catalyses the reaction 2-(5Z,8Z,11Z,14Z)-eicosatetraenoyl-sn-glycero-3-phosphocholine + AH2 + O2 = 2-[(15R)-hydroxy-(5Z,8Z,11Z,13E)-eicosatetraenoyl]-sn-glycero-3-phosphocholine + A + H2O. It carries out the reaction 2-(5Z,8Z,11Z,14Z)-eicosatetraenoyl-sn-glycero-3-phosphocholine + AH2 + O2 = 2-[(11R)-hydroxy-(5Z,8Z,12E,14Z)-eicosatetraenoyl]-sn-glycero-3-phosphocholine + A + H2O. The catalysed reaction is (9Z,12Z)-octadecadienoate + AH2 + O2 = 9-hydroxy-(10E,12Z)-octadecadienoate + A + H2O. The enzyme catalyses (9Z,12Z)-octadecadienoate + AH2 + O2 = 13-hydroxy-(9Z,11E)-octadecadienoate + A + H2O. It catalyses the reaction (5Z,8Z,11Z,14Z)-eicosatetraenoate + AH2 + O2 = (15R)-hydroxy-(5Z,8Z,11Z,13E)-eicosatetraenoate + A + H2O. It carries out the reaction (5Z,8Z,11Z,14Z)-eicosatetraenoate + AH2 + O2 = (11R)-hydroxy-(5Z,8Z,12E,14Z)-eicosatetraenoate + A + H2O. The catalysed reaction is (5Z,8Z,11Z,14Z,17Z)-eicosapentaenoate + AH2 + O2 = (11R)-hydroxy-(5Z,8Z,12E,14Z,17Z)-eicosapentaenoate + A + H2O. The enzyme catalyses (5Z,8Z,11Z,14Z,17Z)-eicosapentaenoate + AH2 + O2 = (18S)-hydroxy-(5Z,8Z,11Z,14Z,16E)-eicosapentaenoate + A + H2O. It catalyses the reaction (5Z,8Z,11Z,14Z,17Z)-eicosapentaenoate + AH2 + O2 = (18R)-hydroxy-(5Z,8Z,11Z,14Z,16E)-eicosapentaenoate + A + H2O. It carries out the reaction (5Z,8Z,11Z,14Z,17Z)-eicosapentaenoate + AH2 + O2 = (15R)-hydroxy-(5Z,8Z,11Z,13E,17Z)-eicosapentaenoate + A + H2O. The catalysed reaction is (5Z,8Z,11Z,14Z,17Z)-eicosapentaenoate + AH2 + O2 = (15S)-hydroxy-(5Z,8Z,11Z,13E,17Z)-eicosapentaenoate + A + H2O. The enzyme catalyses (7Z,10Z,13Z,16Z,19Z)-docosapentaenoate + AH2 + O2 = 13R-hydroxy-(7Z,10Z,14E,16Z,19Z)-docosapentaenoate + A + H2O. It catalyses the reaction (4Z,7Z,10Z,13Z,16Z,19Z)-docosahexaenoate + AH2 + O2 = 13-hydroxy-(4Z,7Z,10Z,14E,16Z,19Z)-docosahexaenoate + A + H2O. It carries out the reaction (5S)-hydroxy-(6E,8Z,11Z,14Z)-eicosatetraenoate + AH2 + O2 = (5S,15R)-dihydroxy-(6E,8Z,11Z,13E)-eicosatetraenoate + A + H2O. The catalysed reaction is (4Z,7Z,10Z,13Z,16Z,19Z)-docosahexaenoate + AH2 + O2 = 17R-hydroxy-(4Z,7Z,10Z,13Z,15E,19Z)-docosahexaenoate + A + H2O. The enzyme catalyses (5S)-hydroxy-(6E,8Z,11Z,14Z)-eicosatetraenoate + AH2 + O2 = (5S,15S)-dihydroxy-(6E,8Z,11Z,13E)-eicosatetraenoate + A + H2O. It catalyses the reaction (5S)-hydroxy-(6E,8Z,11Z,14Z)-eicosatetraenoate + AH2 + O2 = (5S,11R)-dihydroxy-(6E,8Z,12E,14Z)-eicosatetraenoate + A + H2O. It carries out the reaction 2-(5Z,8Z,11Z,14Z-eicosatetraenoyl)-glycerol + 2 O2 = 2-glyceryl-prostaglandin G2. The catalysed reaction is 2-glyceryl-prostaglandin G2 + AH2 = 2-glyceryl-prostaglandin H2 + A + H2O. The enzyme catalyses (5Z,8Z,11Z,14Z)-eicosatetraenoate + O2 = (15R)-hydroperoxy-(5Z,8Z,11Z,13E)-eicosatetraenoate. It catalyses the reaction (5Z,8Z,11Z,14Z)-eicosatetraenoate + O2 = 11R-hydroperoxy-(5Z,8Z,12E,14Z)-eicosatetraenoate. It carries out the reaction (9Z,12Z)-octadecadienoate + AH2 + O2 = (9R)-hydroxy-(10E,12Z)-octadecadienoate + A + H2O. The catalysed reaction is (9Z,12Z)-octadecadienoate + AH2 + O2 = (9S)-hydroxy-(10E,12Z)-octadecadienoate + A + H2O. The enzyme catalyses (9Z,12Z)-octadecadienoate + AH2 + O2 = (13S)-hydroxy-(9Z,11E)-octadecadienoate + A + H2O. It catalyses the reaction (9Z,12Z)-octadecadienoate + AH2 + O2 = (13R)-hydroxy-(9Z,11E)-octadecadienoate + A + H2O. The protein operates within lipid metabolism; prostaglandin biosynthesis. Functionally, dual cyclooxygenase and peroxidase in the biosynthesis pathway of prostanoids, a class of C20 oxylipins mainly derived from arachidonate ((5Z,8Z,11Z,14Z)-eicosatetraenoate, AA, C20:4(n-6)), with a particular role in the inflammatory response. The cyclooxygenase activity oxygenates AA to the hydroperoxy endoperoxide prostaglandin G2 (PGG2), and the peroxidase activity reduces PGG2 to the hydroxy endoperoxide prostaglandin H2 (PGH2), the precursor of all 2-series prostaglandins and thromboxanes. This complex transformation is initiated by abstraction of hydrogen at carbon 13 (with S-stereochemistry), followed by insertion of molecular O2 to form the endoperoxide bridge between carbon 9 and 11 that defines prostaglandins. The insertion of a second molecule of O2 (bis-oxygenase activity) yields a hydroperoxy group in PGG2 that is then reduced to PGH2 by two electrons. Similarly catalyzes successive cyclooxygenation and peroxidation of dihomo-gamma-linoleate (DGLA, C20:3(n-6)) and eicosapentaenoate (EPA, C20:5(n-3)) to corresponding PGH1 and PGH3, the precursors of 1- and 3-series prostaglandins. In an alternative pathway of prostanoid biosynthesis, converts 2-arachidonoyl lysophopholipids to prostanoid lysophopholipids, which are then hydrolyzed by intracellular phospholipases to release free prostanoids. Metabolizes 2-arachidonoyl glycerol yielding the glyceryl ester of PGH2, a process that can contribute to pain response. Generates lipid mediators from n-3 and n-6 polyunsaturated fatty acids (PUFAs) via a lipoxygenase-type mechanism. Oxygenates PUFAs to hydroperoxy compounds and then reduces them to corresponding alcohols. Plays a role in the generation of resolution phase interaction products (resolvins) during both sterile and infectious inflammation. Metabolizes docosahexaenoate (DHA, C22:6(n-3)) to 17R-HDHA, a precursor of the D-series resolvins (RvDs). As a component of the biosynthetic pathway of E-series resolvins (RvEs), converts eicosapentaenoate (EPA, C20:5(n-3)) primarily to 18S-HEPE that is further metabolized by ALOX5 and LTA4H to generate 18S-RvE1 and 18S-RvE2. In vascular endothelial cells, converts docosapentaenoate (DPA, C22:5(n-3)) to 13R-HDPA, a precursor for 13-series resolvins (RvTs) shown to activate macrophage phagocytosis during bacterial infection. In activated leukocytes, contributes to oxygenation of hydroxyeicosatetraenoates (HETE) to diHETES (5,15-diHETE and 5,11-diHETE). Can also use linoleate (LA, (9Z,12Z)-octadecadienoate, C18:2(n-6)) as substrate and produce hydroxyoctadecadienoates (HODEs) in a regio- and stereospecific manner, being (9R)-HODE ((9R)-hydroxy-(10E,12Z)-octadecadienoate) and (13S)-HODE ((13S)-hydroxy-(9Z,11E)-octadecadienoate) its major products. During neuroinflammation, plays a role in neuronal secretion of specialized preresolving mediators (SPMs) 15R-lipoxin A4 that regulates phagocytic microglia. The protein is Prostaglandin G/H synthase 2 (PTGS2) of Bos taurus (Bovine).